Here is a 503-residue protein sequence, read N- to C-terminus: Palmitoleoyl-protein carboxylesterase NOTUM (503 aa).

Residues 1 to 19 (MGGEVRVLLLLGLLHWVGG) form the signal peptide. Residues 23 to 53 (RKTWRRRGQQPPQPPPPPPLPQRAEVEPGAG) form a disordered region. The segment covering 33–43 (PPQPPPPPPLP) has biased composition (pro residues). Phosphoserine is present on Ser-88. N-linked (GlcNAc...) asparagine glycosylation is present at Asn-103. Active-site charge relay system residues include Ser-239, Asp-347, and His-396.

The protein belongs to the pectinacetylesterase family. Notum subfamily. Widely expressed. Expressed in lung, ovary, kidney, liver and brain. Not detected in thymus, heart, spleen, stomach, skeletal muscle and bone marrow.

It is found in the secreted. The enzyme catalyses [Wnt protein]-O-(9Z)-hexadecenoyl-L-serine + H2O = [Wnt protein]-L-serine + (9Z)-hexadecenoate + H(+). Its function is as follows. Carboxylesterase that acts as a key negative regulator of the Wnt signaling pathway by specifically mediating depalmitoleoylation of WNT proteins. Serine palmitoleoylation of WNT proteins is required for efficient binding to frizzled receptors. The sequence is that of Palmitoleoyl-protein carboxylesterase NOTUM from Mus musculus (Mouse).